The primary structure comprises 151 residues: MTGLERQLTEMLEAPVGALGYELVGLEFVRAGEHSTLRVFIDHENGIFVEDCAEASRQISAVMDVEDPITVAYNLEVSSPGLERPLFKAAHYQQFVGHEVSLVLKMPMNNRRKWKGDILEINGEIVTVTVDGNNEEFALSNISKANLVPKF.

Belongs to the RimP family.

Its subcellular location is the cytoplasm. Functionally, required for maturation of 30S ribosomal subunits. This chain is Ribosome maturation factor RimP, found in Aliivibrio fischeri (strain ATCC 700601 / ES114) (Vibrio fischeri).